Reading from the N-terminus, the 435-residue chain is ATP-dependent RNA helicase RhlB (435 aa).

A Q motif motif is present at residues 9–37 (QKFADFSLQTEIKTALNESGFEYCTPIQA). In terms of domain architecture, Helicase ATP-binding spans 40–219 (LPILLQKKDI…YDHMNEPEKV (180 aa)). 53–60 (AQTGTGKT) lines the ATP pocket. A DEAD box motif is present at residues 165–168 (DEAD). Residues 243 to 390 (KMRLLLTLLE…VTNYDSEALL (148 aa)) enclose the Helicase C-terminal domain. The disordered stretch occupies residues 395–435 (APVRVHRKHNSRPQGRSGSGGKPRSGNRNAPRRHDKTRRHS). Basic residues predominate over residues 424-435 (APRRHDKTRRHS).

Belongs to the DEAD box helicase family. RhlB subfamily. Component of the RNA degradosome, which is a multiprotein complex involved in RNA processing and mRNA degradation.

The protein resides in the cytoplasm. It carries out the reaction ATP + H2O = ADP + phosphate + H(+). Functionally, DEAD-box RNA helicase involved in RNA degradation. Has RNA-dependent ATPase activity and unwinds double-stranded RNA. The polypeptide is ATP-dependent RNA helicase RhlB (Shewanella sediminis (strain HAW-EB3)).